Reading from the N-terminus, the 1205-residue chain is A disintegrin and metalloproteinase with thrombospondin motifs 3 (1205 aa).

Positions 1-20 (MVLLSLWLIAAALVEVRTSA) are cleaved as a signal peptide. The propeptide occupies 21 to 249 (DGQAGNEEMV…QLNETMRRRR (229 aa)). Residues Asn-83, Asn-119, Asn-242, and Asn-345 are each glycosylated (N-linked (GlcNAc...) asparagine). In terms of domain architecture, Peptidase M12B spans 256–460 (YNIEVLLGVD…HSYDCLLDDP (205 aa)). Cystine bridges form between Cys-333–Cys-382, Cys-376–Cys-455, and Cys-415–Cys-441. His-398 contacts Zn(2+). Glu-399 is an active-site residue. Positions 402 and 408 each coordinate Zn(2+). The Disintegrin domain maps to 470–550 (ELPGINYSMD…MWKNANQQKQ (81 aa)). Asn-475 is a glycosylation site (N-linked (GlcNAc...) asparagine). 7 cysteine pairs are disulfide-bonded: Cys-482/Cys-507, Cys-493/Cys-516, Cys-502/Cys-535, Cys-529/Cys-540, Cys-563/Cys-600, Cys-567/Cys-605, and Cys-578/Cys-590. The 56-residue stretch at 551-606 (DGNWGSWTKFGSCSRTCGTGVRFRTRQCNNPMPINGGQDCPGVNFEYQLCNTEECQ) folds into the TSP type-1 1 domain. The interval 713–844 (RTVKGTFTRT…NSNNVIQEEL (132 aa)) is spacer. An N-linked (GlcNAc...) asparagine glycan is attached at Asn-814. TSP type-1 domains follow at residues 845–905 (DTFE…QECT), 906–965 (HPLW…NRVP), and 966–1014 (CPAQ…QLPP). N-linked (GlcNAc...) asparagine glycosylation is present at Asn-942. Cystine bridges form between Cys-978–Cys-1010, Cys-982–Cys-1015, and Cys-993–Cys-999. Residues 1015-1054 (CNDEPCLGDKSIFCQMEVLARYCSIPGYNKLCCESCSKRS) enclose the PLAC domain. The segment at 1174–1205 (DSIGASSQARTSKKDGKIIDNRRPTRSSTLER) is disordered. Over residues 1185 to 1205 (SKKDGKIIDNRRPTRSSTLER) the composition is skewed to basic and acidic residues.

The cofactor is Zn(2+). In terms of processing, the precursor is cleaved by a furin endopeptidase. Glycosylated. Can be O-fucosylated by POFUT2 on a serine or a threonine residue found within the consensus sequence C1-X(2)-(S/T)-C2-G of the TSP type-1 repeat domains where C1 and C2 are the first and second cysteine residue of the repeat, respectively. Fucosylated repeats can then be further glycosylated by the addition of a beta-1,3-glucose residue by the glucosyltransferase, B3GALTL. Fucosylation mediates the efficient secretion of ADAMTS family members. Can also be C-glycosylated with one or two mannose molecules on tryptophan residues within the consensus sequence W-X-X-W of the TPRs, and N-glycosylated. These other glycosylations can also facilitate secretion. As to expression, found in cartilage and skin.

The protein resides in the secreted. It localises to the extracellular space. The protein localises to the extracellular matrix. Cleaves the propeptides of type II collagen prior to fibril assembly. Does not act on types I and III collagens. The polypeptide is A disintegrin and metalloproteinase with thrombospondin motifs 3 (ADAMTS3) (Homo sapiens (Human)).